We begin with the raw amino-acid sequence, 420 residues long: MAKFDILEDLKWRGAINQETDEEGLRKYLAEHDDLALYCGTDPTGDSLHIGHLIPFMILKRFQMAGYHPVILIGGGTGAIGDPSGRKTERTLQTADQVKHNEECLTNQMKKLFGTENFEIRNNAEWLGKLNLIDFLRDYGKFFQVNNMINKEVVASRLENGISFTEFTYQILQAIDFYHLNKDDGVQLQIGGSDQWGNITAGIDLIHKLEGADRPAFGLTIPLMLKADGTKFGKSAGGAVWLDPEKTSPYEFYQFWINQDDRDVVKYLKYFAFLSREEIEDLAEKTEKEPWKRAAQKRLAEEVTKFVHGEAGLKEAQMITDALFSGNIKNLSVTQIEQGLKNAPSAEAGSEKKNLVDFLVDTKIEPSKRQAREDIKNGAIYVNGDREQSVDFDVDPSSAFDGKYVIIRKGKRKYTLVTIK.

L-tyrosine is bound at residue Tyr38. The 'HIGH' region signature appears at Pro43–His52. Positions 169 and 173 each coordinate L-tyrosine. The 'KMSKS' region motif lies at Lys231 to Ser235. Lys234 is an ATP binding site. One can recognise an S4 RNA-binding domain in the interval Lys353–Ile419.

It belongs to the class-I aminoacyl-tRNA synthetase family. TyrS type 1 subfamily. As to quaternary structure, homodimer.

The protein resides in the cytoplasm. The catalysed reaction is tRNA(Tyr) + L-tyrosine + ATP = L-tyrosyl-tRNA(Tyr) + AMP + diphosphate + H(+). In terms of biological role, catalyzes the attachment of tyrosine to tRNA(Tyr) in a two-step reaction: tyrosine is first activated by ATP to form Tyr-AMP and then transferred to the acceptor end of tRNA(Tyr). In Lactobacillus helveticus (strain DPC 4571), this protein is Tyrosine--tRNA ligase.